The sequence spans 140 residues: ATP synthase epsilon chain (140 aa).

Belongs to the ATPase epsilon chain family. F-type ATPases have 2 components, CF(1) - the catalytic core - and CF(0) - the membrane proton channel. CF(1) has five subunits: alpha(3), beta(3), gamma(1), delta(1), epsilon(1). CF(0) has three main subunits: a, b and c.

The protein resides in the cell inner membrane. In terms of biological role, produces ATP from ADP in the presence of a proton gradient across the membrane. This chain is ATP synthase epsilon chain, found in Neisseria gonorrhoeae (strain ATCC 700825 / FA 1090).